The primary structure comprises 231 residues: 2,3-bisphosphoglycerate-dependent phosphoglycerate mutase (231 aa).

Residues R8 to N15, T21 to G22, R60, E87 to Y90, K98, R114 to R115, and G183 to N184 contribute to the substrate site. H9 acts as the Tele-phosphohistidine intermediate in catalysis. E87 (proton donor/acceptor) is an active-site residue.

Belongs to the phosphoglycerate mutase family. BPG-dependent PGAM subfamily.

It catalyses the reaction (2R)-2-phosphoglycerate = (2R)-3-phosphoglycerate. Its pathway is carbohydrate degradation; glycolysis; pyruvate from D-glyceraldehyde 3-phosphate: step 3/5. Functionally, catalyzes the interconversion of 2-phosphoglycerate and 3-phosphoglycerate. This Streptococcus equi subsp. zooepidemicus (strain H70) protein is 2,3-bisphosphoglycerate-dependent phosphoglycerate mutase.